A 199-amino-acid polypeptide reads, in one-letter code: Outer-membrane lipoprotein LolB (199 aa).

The signal sequence occupies residues 1 to 28; that stretch reads MSACPAPRSPFRWLHAFTLCLLLAVLAG. Cys-29 is lipidated: N-palmitoyl cysteine. Cys-29 carries S-diacylglycerol cysteine lipidation.

It belongs to the LolB family. Monomer.

Its subcellular location is the cell outer membrane. Functionally, plays a critical role in the incorporation of lipoproteins in the outer membrane after they are released by the LolA protein. This chain is Outer-membrane lipoprotein LolB, found in Bordetella bronchiseptica (strain ATCC BAA-588 / NCTC 13252 / RB50) (Alcaligenes bronchisepticus).